The following is a 397-amino-acid chain: tRNA (guanine-N(7)-)-methyltransferase non-catalytic subunit wuho (397 aa).

WD repeat units lie at residues 75-115, 163-202, 206-244, and 303-343; these read KVEV…AQLL, GHLS…DIHS, GHKE…ELLL, and AGTW…RASG.

It belongs to the WD repeat TRM82 family. As to quaternary structure, forms a heterodimer with the catalytic subunit Mettl1. Interacts with mei-P26 and weakly interacts with bgcn; required for the function or formation of the mei-P26-bgcn-bam-sxl complex. Interacts with nanos; may be involved in mei-P26-dependent derepression of the BMP signaling pathway. Interacts with Myc; the interaction may be mediated by mei-P26 and may be involved in the regulation of ribosome biogenesis. As to expression, in testis, it is present at high level in hub cells, a niche for germline stem cells of testis. Ubiquitously expressed in all testicular cells throughout spermatogenesis. Ubiquitously expressed in all germline and somatic cells of the ovary.

The protein resides in the nucleus. Its subcellular location is the cytoplasm. Its pathway is tRNA modification; N(7)-methylguanine-tRNA biosynthesis. Required for the Mettl1-dependent formation of N(7)-methylguanine at position 46 (m7G46) in tRNA. In the Mettl1-wuho methyltransferase complex, it is required to stabilize and induce conformational changes of the catalytic subunit. Required for binding of nanos mRNA and repression of translation by the mei-P26-bgcn-bam-sxl complex. May cooperate with mei-P26 and nanos to derepress the BMP signaling pathway. May cooperate with mei-P26 to suppress expression of a subset of microRNAs. May cooperate with mei-P26 to regulate bam expression levels in germline cells during gametogenesis. Required to promote mitosis to meiosis transition during gametogenesis. May regulate germline cell division in part by regulating ribosome biogenesis. This is tRNA (guanine-N(7)-)-methyltransferase non-catalytic subunit wuho from Drosophila persimilis (Fruit fly).